A 568-amino-acid polypeptide reads, in one-letter code: 2-succinyl-5-enolpyruvyl-6-hydroxy-3-cyclohexene-1-carboxylate synthase (568 aa).

The protein belongs to the TPP enzyme family. MenD subfamily. As to quaternary structure, homodimer. The cofactor is Mg(2+). Mn(2+) is required as a cofactor. It depends on thiamine diphosphate as a cofactor.

The catalysed reaction is isochorismate + 2-oxoglutarate + H(+) = 5-enolpyruvoyl-6-hydroxy-2-succinyl-cyclohex-3-ene-1-carboxylate + CO2. Its pathway is quinol/quinone metabolism; 1,4-dihydroxy-2-naphthoate biosynthesis; 1,4-dihydroxy-2-naphthoate from chorismate: step 2/7. It participates in quinol/quinone metabolism; menaquinone biosynthesis. Catalyzes the thiamine diphosphate-dependent decarboxylation of 2-oxoglutarate and the subsequent addition of the resulting succinic semialdehyde-thiamine pyrophosphate anion to isochorismate to yield 2-succinyl-5-enolpyruvyl-6-hydroxy-3-cyclohexene-1-carboxylate (SEPHCHC). The protein is 2-succinyl-5-enolpyruvyl-6-hydroxy-3-cyclohexene-1-carboxylate synthase of Actinobacillus succinogenes (strain ATCC 55618 / DSM 22257 / CCUG 43843 / 130Z).